Here is a 103-residue protein sequence, read N- to C-terminus: Putative membrane protein insertion efficiency factor (103 aa).

Belongs to the UPF0161 family.

It localises to the cell inner membrane. Could be involved in insertion of integral membrane proteins into the membrane. The protein is Putative membrane protein insertion efficiency factor of Chlamydia pneumoniae (Chlamydophila pneumoniae).